The sequence spans 449 residues: Bifunctional protein GlmU (449 aa).

The segment at 1–231 (MVRNCLSIVL…FDNVIGINNC (231 aa)) is pyrophosphorylase. UDP-N-acetyl-alpha-D-glucosamine-binding positions include 10–13 (LAAG), Lys24, Gln77, and 82–83 (GT). Mg(2+) is bound at residue Asp107. Gly143, Glu157, Asn172, and Asn229 together coordinate UDP-N-acetyl-alpha-D-glucosamine. Asn229 is a Mg(2+) binding site. A linker region spans residues 232-252 (FELFEADALWQKRKARDLMLS). The segment at 253–449 (GVTILKPESV…AHLSKNKRNK (197 aa)) is N-acetyltransferase. Residues Arg318 and Lys336 each coordinate UDP-N-acetyl-alpha-D-glucosamine. The active-site Proton acceptor is His348. UDP-N-acetyl-alpha-D-glucosamine contacts are provided by Tyr351 and Asn362. Acetyl-CoA is bound by residues Ala365, 371 to 372 (NY), Ser390, Ser408, and Arg425.

The protein in the N-terminal section; belongs to the N-acetylglucosamine-1-phosphate uridyltransferase family. This sequence in the C-terminal section; belongs to the transferase hexapeptide repeat family. As to quaternary structure, homotrimer. Requires Mg(2+) as cofactor.

The protein localises to the cytoplasm. The enzyme catalyses alpha-D-glucosamine 1-phosphate + acetyl-CoA = N-acetyl-alpha-D-glucosamine 1-phosphate + CoA + H(+). It catalyses the reaction N-acetyl-alpha-D-glucosamine 1-phosphate + UTP + H(+) = UDP-N-acetyl-alpha-D-glucosamine + diphosphate. It participates in nucleotide-sugar biosynthesis; UDP-N-acetyl-alpha-D-glucosamine biosynthesis; N-acetyl-alpha-D-glucosamine 1-phosphate from alpha-D-glucosamine 6-phosphate (route II): step 2/2. Its pathway is nucleotide-sugar biosynthesis; UDP-N-acetyl-alpha-D-glucosamine biosynthesis; UDP-N-acetyl-alpha-D-glucosamine from N-acetyl-alpha-D-glucosamine 1-phosphate: step 1/1. The protein operates within bacterial outer membrane biogenesis; LPS lipid A biosynthesis. Catalyzes the last two sequential reactions in the de novo biosynthetic pathway for UDP-N-acetylglucosamine (UDP-GlcNAc). The C-terminal domain catalyzes the transfer of acetyl group from acetyl coenzyme A to glucosamine-1-phosphate (GlcN-1-P) to produce N-acetylglucosamine-1-phosphate (GlcNAc-1-P), which is converted into UDP-GlcNAc by the transfer of uridine 5-monophosphate (from uridine 5-triphosphate), a reaction catalyzed by the N-terminal domain. The polypeptide is Bifunctional protein GlmU (Bartonella bacilliformis (strain ATCC 35685 / KC583 / Herrer 020/F12,63)).